The primary structure comprises 521 residues: Cysteine protease atg-4.2 (521 aa).

Low complexity predominate over residues 90-100 (MMGSIRPSSSS). The tract at residues 90-109 (MMGSIRPSSSSQDVHSTGEI) is disordered. The active-site Nucleophile is Cys203. Residues Asp394 and His396 contribute to the active site. A disordered region spans residues 499 to 521 (PSYEREVSETEQAQADKHGFEML).

It belongs to the peptidase C54 family.

The protein localises to the cytoplasm. It catalyses the reaction [protein]-C-terminal L-amino acid-glycyl-phosphatidylethanolamide + H2O = [protein]-C-terminal L-amino acid-glycine + a 1,2-diacyl-sn-glycero-3-phosphoethanolamine. Cysteine protease required for autophagy. Cleaves the C-terminal amino acid of ATG8 family proteins lgg-1, to reveal a C-terminal glycine. Exposure of the glycine at the C-terminus is essential for ATG8 proteins conjugation to phosphatidylethanolamine (PE) and insertion to membranes, which is necessary for autophagy. Its cleavage activity is functionally redundant to atg-4.1, but it cleaves lgg-1 precursors less efficiently than atg-4.1. In contrast to atg-4.1, plays a more significant role in the later phases of autophagy and in addition has a role in autophagosome maturation. Acts redundantly with atg-4.1 to promote the lgg-1 delipidation to release the protein from membranes, which facilitates multiple events during macroautophagy. Regulates the accumulation of autophagic structures in neurons and is specifically, required for the maturation and elimination of autophagosomes from the synaptic region of AIY interneurons. The polypeptide is Cysteine protease atg-4.2 (Caenorhabditis elegans).